The primary structure comprises 198 residues: Putative Do-like 15 protein (198 aa).

The interval 48 to 198 is serine protease; sequence KIFSFSREPN…VFENDSPSDK (151 aa). Active-site charge relay system residues include H86 and S175.

It belongs to the peptidase S1B family.

In Arabidopsis thaliana (Mouse-ear cress), this protein is Putative Do-like 15 protein (DEGP15).